Here is a 154-residue protein sequence, read N- to C-terminus: PTTG1IP family member 2 (154 aa).

The signal sequence occupies residues 1–26 (MCWLRAWGQILLPVFLSLFLIQLLIS). Residues 27-97 (FSENGFIHSP…SIYWLNCKVD (71 aa)) lie on the Extracellular side of the membrane. The chain crosses the membrane as a helical span at residues 98-118 (MFGIMMLLLIAVLITGFVWYC). Residues 119 to 154 (CAYHFYLQDLNRNRVYFYGRRETVPIHDRSATVYDE) lie on the Cytoplasmic side of the membrane.

It localises to the membrane. In Homo sapiens (Human), this protein is PTTG1IP family member 2.